A 448-amino-acid polypeptide reads, in one-letter code: 3-phosphoshikimate 1-carboxyvinyltransferase (448 aa).

Lys28, Ser29, and Arg33 together coordinate 3-phosphoshikimate. Lys28 provides a ligand contact to phosphoenolpyruvate. Positions 100 and 128 each coordinate phosphoenolpyruvate. The 3-phosphoshikimate site is built by Ser173, Gln175, Asp326, and Lys353. Phosphoenolpyruvate is bound at residue Gln175. The active-site Proton acceptor is Asp326. The phosphoenolpyruvate site is built by Arg357 and Arg405.

Belongs to the EPSP synthase family. As to quaternary structure, monomer.

Its subcellular location is the cytoplasm. The catalysed reaction is 3-phosphoshikimate + phosphoenolpyruvate = 5-O-(1-carboxyvinyl)-3-phosphoshikimate + phosphate. It participates in metabolic intermediate biosynthesis; chorismate biosynthesis; chorismate from D-erythrose 4-phosphate and phosphoenolpyruvate: step 6/7. Functionally, catalyzes the transfer of the enolpyruvyl moiety of phosphoenolpyruvate (PEP) to the 5-hydroxyl of shikimate-3-phosphate (S3P) to produce enolpyruvyl shikimate-3-phosphate and inorganic phosphate. This is 3-phosphoshikimate 1-carboxyvinyltransferase from Sinorhizobium fredii (strain NBRC 101917 / NGR234).